The following is a 642-amino-acid chain: Threonine--tRNA ligase (642 aa).

The TGS domain maps to 1–61 (MPVITLPDGS…EHDAQIAIIT (61 aa)). The segment at 243-534 (DHRKIGKQLD…LTEEYAGFYP (292 aa)) is catalytic. Cys-334, His-385, and His-511 together coordinate Zn(2+).

The protein belongs to the class-II aminoacyl-tRNA synthetase family. Homodimer. The cofactor is Zn(2+).

It localises to the cytoplasm. The catalysed reaction is tRNA(Thr) + L-threonine + ATP = L-threonyl-tRNA(Thr) + AMP + diphosphate + H(+). Functionally, catalyzes the attachment of threonine to tRNA(Thr) in a two-step reaction: L-threonine is first activated by ATP to form Thr-AMP and then transferred to the acceptor end of tRNA(Thr). Also edits incorrectly charged L-seryl-tRNA(Thr). This chain is Threonine--tRNA ligase, found in Sodalis glossinidius (strain morsitans).